A 179-amino-acid chain; its full sequence is MNRLKEKYQKEIVPSLTEKFNYSSVMAVPKLEKIVVNMGVGDAVQNAKALDKAVEELTEITGQKPIITKAKKSIAGFKLREGMPIGAKVTLRGERMYEFLDKLISVSLPRVRDFRGISKKAFDGRGNYTLGVKEQLIFPEIDYDKVDKVRGMDVVIVTTASTDEEARELLSQMGMPFQK.

It belongs to the universal ribosomal protein uL5 family. In terms of assembly, part of the 50S ribosomal subunit; part of the 5S rRNA/L5/L18/L25 subcomplex. Contacts the 5S rRNA and the P site tRNA. Forms a bridge to the 30S subunit in the 70S ribosome.

This is one of the proteins that bind and probably mediate the attachment of the 5S RNA into the large ribosomal subunit, where it forms part of the central protuberance. In the 70S ribosome it contacts protein S13 of the 30S subunit (bridge B1b), connecting the 2 subunits; this bridge is implicated in subunit movement. Contacts the P site tRNA; the 5S rRNA and some of its associated proteins might help stabilize positioning of ribosome-bound tRNAs. The chain is Large ribosomal subunit protein uL5 from Halalkalibacterium halodurans (strain ATCC BAA-125 / DSM 18197 / FERM 7344 / JCM 9153 / C-125) (Bacillus halodurans).